The sequence spans 331 residues: Phenylalanine--tRNA ligase alpha subunit (331 aa).

A Mg(2+)-binding site is contributed by Glu252.

This sequence belongs to the class-II aminoacyl-tRNA synthetase family. Phe-tRNA synthetase alpha subunit type 1 subfamily. As to quaternary structure, tetramer of two alpha and two beta subunits. Mg(2+) serves as cofactor.

It is found in the cytoplasm. The enzyme catalyses tRNA(Phe) + L-phenylalanine + ATP = L-phenylalanyl-tRNA(Phe) + AMP + diphosphate + H(+). The sequence is that of Phenylalanine--tRNA ligase alpha subunit from Hahella chejuensis (strain KCTC 2396).